Consider the following 356-residue polypeptide: Phosphoribosyl pyrophosphate synthase-associated protein 1 (356 aa).

An N-acetylmethionine modification is found at Met1. A phosphoserine mark is found at Ser177 and Ser215.

Belongs to the ribose-phosphate pyrophosphokinase family. In terms of assembly, binds to PRPS1 and PRPS2. Ubiquitous.

Functionally, seems to play a negative regulatory role in 5-phosphoribose 1-diphosphate synthesis. This chain is Phosphoribosyl pyrophosphate synthase-associated protein 1 (Prpsap1), found in Rattus norvegicus (Rat).